Here is a 145-residue protein sequence, read N- to C-terminus: Ribonuclease VapC24 (145 aa).

The PINc domain maps to 4-123; that stretch reads IDTNILLYAQ…RHHGVDEFAT (120 aa). Asp5 and Asp106 together coordinate Mg(2+).

Belongs to the PINc/VapC protein family. It depends on Mg(2+) as a cofactor.

In terms of biological role, toxic component of a type II toxin-antitoxin (TA) system. An RNase. Its cognate antitoxin is VapB24. The protein is Ribonuclease VapC24 of Mycobacterium tuberculosis (strain CDC 1551 / Oshkosh).